A 170-amino-acid chain; its full sequence is Lipocalin Cav p 2.0101 (170 aa).

The N-terminal stretch at 1-16 (MMQILLLALAVSLACA) is a signal peptide. 2 cysteine pairs are disulfide-bonded: C56–C60 and C75–C168.

This sequence belongs to the calycin superfamily. Lipocalin family. In terms of processing, not N-linked glycosylated. In terms of tissue distribution, expressed in harderian gland (at protein level). Expressed in hair (at protein level). Expressed in submaxillary gland and harderian gland.

The protein localises to the secreted. This is Lipocalin Cav p 2.0101 (Lcncavp2) from Cavia porcellus (Guinea pig).